Reading from the N-terminus, the 177-residue chain is Thymidine kinase (177 aa).

Residue 11-18 (GPMFSGKS) participates in ATP binding. E83 acts as the Proton acceptor in catalysis. F113 serves as a coordination point for substrate. Residues C138 and C141 each coordinate Zn(2+). Position 157 to 161 (157 to 161 (IEIIG)) interacts with substrate. Positions 170 and 173 each coordinate Zn(2+).

The protein belongs to the thymidine kinase family. Homotetramer. Two molecules of substrate bind to each enzyme tetramer.

The catalysed reaction is thymidine + ATP = dTMP + ADP + H(+). In terms of biological role, phosphorylates thymidine and thymidine analogs, such as azidothymidine (AZT). Part of the salvage pathway for pyrimidine deoxyribonucleotide synthesis. In Vaccinia virus (strain Copenhagen) (VACV), this protein is Thymidine kinase (OPG101).